Reading from the N-terminus, the 63-residue chain is Male-specific sperm protein Mst84Da (63 aa).

The protein belongs to the MST(3)CGP family. Testis.

The sequence is that of Male-specific sperm protein Mst84Da (Mst84Da) from Drosophila melanogaster (Fruit fly).